The sequence spans 139 residues: Nucleoside diphosphate kinase (139 aa).

Positions 10, 58, 86, 92, 104, and 114 each coordinate ATP. Histidine 117 (pros-phosphohistidine intermediate) is an active-site residue.

The protein belongs to the NDK family. Homotetramer. Mg(2+) is required as a cofactor.

The protein resides in the cytoplasm. It carries out the reaction a 2'-deoxyribonucleoside 5'-diphosphate + ATP = a 2'-deoxyribonucleoside 5'-triphosphate + ADP. It catalyses the reaction a ribonucleoside 5'-diphosphate + ATP = a ribonucleoside 5'-triphosphate + ADP. In terms of biological role, major role in the synthesis of nucleoside triphosphates other than ATP. The ATP gamma phosphate is transferred to the NDP beta phosphate via a ping-pong mechanism, using a phosphorylated active-site intermediate. In Mycolicibacterium smegmatis (strain ATCC 700084 / mc(2)155) (Mycobacterium smegmatis), this protein is Nucleoside diphosphate kinase.